Consider the following 359-residue polypeptide: Probable RNA methyltransferase RPD_2859 (359 aa).

The active-site Proton acceptor is Glu99. One can recognise a Radical SAM core domain in the interval 105–330 (RFDGHTACIS…PVVVRDTQGR (226 aa)). Cys112 and Cys336 are oxidised to a cystine. Positions 119, 123, and 126 each coordinate [4Fe-4S] cluster. S-adenosyl-L-methionine is bound by residues 162–163 (GE), Ser194, 217–219 (SLH), and Asn293. The active-site S-methylcysteine intermediate is the Cys336.

The protein belongs to the radical SAM superfamily. RlmN family. [4Fe-4S] cluster is required as a cofactor.

It is found in the cytoplasm. This is Probable RNA methyltransferase RPD_2859 from Rhodopseudomonas palustris (strain BisB5).